The sequence spans 389 residues: Glutamate 5-kinase (389 aa).

Lysine 26 contacts ATP. Substrate contacts are provided by serine 66, aspartate 153, and asparagine 167. 187 to 188 (TD) lines the ATP pocket. A PUA domain is found at 293-371 (AGTLFLDQGA…EQIEWILGHR (79 aa)).

It belongs to the glutamate 5-kinase family.

Its subcellular location is the cytoplasm. The catalysed reaction is L-glutamate + ATP = L-glutamyl 5-phosphate + ADP. The protein operates within amino-acid biosynthesis; L-proline biosynthesis; L-glutamate 5-semialdehyde from L-glutamate: step 1/2. Its function is as follows. Catalyzes the transfer of a phosphate group to glutamate to form L-glutamate 5-phosphate. In Rhodopirellula baltica (strain DSM 10527 / NCIMB 13988 / SH1), this protein is Glutamate 5-kinase.